A 231-amino-acid polypeptide reads, in one-letter code: 7-cyano-7-deazaguanine synthase (231 aa).

An ATP-binding site is contributed by 11-21 (LSGGLDSATTM). Zn(2+) is bound by residues C195, C205, C208, and C211.

It belongs to the QueC family. It depends on Zn(2+) as a cofactor.

The catalysed reaction is 7-carboxy-7-deazaguanine + NH4(+) + ATP = 7-cyano-7-deazaguanine + ADP + phosphate + H2O + H(+). It functions in the pathway purine metabolism; 7-cyano-7-deazaguanine biosynthesis. In terms of biological role, catalyzes the ATP-dependent conversion of 7-carboxy-7-deazaguanine (CDG) to 7-cyano-7-deazaguanine (preQ(0)). The chain is 7-cyano-7-deazaguanine synthase from Syntrophus aciditrophicus (strain SB).